Here is a 180-residue protein sequence, read N- to C-terminus: Acireductone dioxygenase (180 aa).

Fe(2+) contacts are provided by His-97, His-99, Glu-103, and His-141. Ni(2+) is bound by residues His-97, His-99, Glu-103, and His-141.

This sequence belongs to the acireductone dioxygenase (ARD) family. Monomer. Requires Fe(2+) as cofactor. Ni(2+) is required as a cofactor.

It catalyses the reaction 1,2-dihydroxy-5-(methylsulfanyl)pent-1-en-3-one + O2 = 3-(methylsulfanyl)propanoate + CO + formate + 2 H(+). It carries out the reaction 1,2-dihydroxy-5-(methylsulfanyl)pent-1-en-3-one + O2 = 4-methylsulfanyl-2-oxobutanoate + formate + 2 H(+). It functions in the pathway amino-acid biosynthesis; L-methionine biosynthesis via salvage pathway; L-methionine from S-methyl-5-thio-alpha-D-ribose 1-phosphate: step 5/6. Functionally, catalyzes 2 different reactions between oxygen and the acireductone 1,2-dihydroxy-3-keto-5-methylthiopentene (DHK-MTPene) depending upon the metal bound in the active site. Fe-containing acireductone dioxygenase (Fe-ARD) produces formate and 2-keto-4-methylthiobutyrate (KMTB), the alpha-ketoacid precursor of methionine in the methionine recycle pathway. Ni-containing acireductone dioxygenase (Ni-ARD) produces methylthiopropionate, carbon monoxide and formate, and does not lie on the methionine recycle pathway. This Cronobacter sakazakii (Enterobacter sakazakii) protein is Acireductone dioxygenase.